A 70-amino-acid chain; its full sequence is Toxin Isom2 (70 aa).

In terms of domain architecture, LCN-type CS-alpha/beta spans 2–65; that stretch reads KNGYAVDSSG…ISDTRKKYCD (64 aa). Intrachain disulfides connect cysteine 16-cysteine 37, cysteine 22-cysteine 42, cysteine 26-cysteine 44, and cysteine 38-cysteine 64.

In terms of tissue distribution, expressed by the venom gland.

It localises to the secreted. Excitatory insect beta-toxins induce a spastic paralysis. They bind voltage-independently at site-4 of sodium channels (Nav) and shift the voltage of activation toward more negative potentials thereby affecting sodium channel activation and promoting spontaneous and repetitive firing. This is Toxin Isom2 from Isometrus vittatus (Bark scorpion).